The sequence spans 817 residues: MSVYGKIPSTSFEHENTFELSGDLLDPEELKSLGVSGRIIYVLRHLPFKSSINEETREWDLSGRRGATTMYSSMNWLANSTYWQTTLVGWTGVIPTVSEKEENKDAVTRLDSQDVKRFEETYSQWNSGERSTEYVPVWLPGPEKGSETIINETRSQQSRWLAYAENVIRPLIHYKYWPSSEVDENEEQWWRDYVKMNHAFADKICEIYKPGDFIIVQDYSLFLVPQLIRNKIDDAVIGFYHHHPFPSSEIARCFPRRRAILRSVLGADFIGFEDYSYARHFISCCSRVLDLEIGHDWVNLNGNKVTVRAITVGIDVPRIIRSSGNVSVSEKLEELNKRYENMKVILGRDRLDELYGVPQKLRSFQRFLRTYPEWRKKVVLIQITISSAFKHPKLLSSIKKLVQAINQEFGTDDYTPVHHVEEQLEPADYFALLTRADALFINSIREGVSNLALEYVVCQRDRYGMVLLSEFTATSAMLHDVPLINPWDYNECAEIISNALSTPLERRKMIERESYKQVTTHTMQSWTSSLIRSLANKLAATKTDQRIPTLTPEHALSVYSKASKRLFMMDYDGTLTPIVRDPNAAVPSKKLLDNLATLAADPKNQVWIISGRDQQFLRNWMDDIKGLGLSAEHGSFVRKPHSTTWINLAELLDMSWKKEVRRIFQYYTDRTQGSSIEEKRCAMTWHYRKADPENGAFQALECEALLEELVCSKYDVEIMRGKANLEVRPSSINKGGIVKQILSSYPEDSLPSFIFCAGDDRTDEDMFRSLHKNTRINKETSFAVTIGSDKKLSIADWCIADPANVIDILADLANFTN.

Residues 1–547 (MSVYGKIPST…LAATKTDQRI (547 aa)) are glycosyltransferase.

This sequence in the N-terminal section; belongs to the glycosyltransferase 20 family. In the C-terminal section; belongs to the trehalose phosphatase family. Component of the trehalose synthase complex that contains at least tps1, ntp1, and tpp1. Interacts with tps1. Interacts with ntp1. The cofactor is Mg(2+).

The enzyme catalyses alpha,alpha-trehalose 6-phosphate + H2O = alpha,alpha-trehalose + phosphate. It functions in the pathway carbohydrate biosynthesis. In terms of biological role, phosphatase catalytic subunit of the trehalose synthase complex that catalyzes the production of trehalose from glucose-6-phosphate and UDP-alpha-D-glucose in a two step process. The disaccharide trehalose serves as a storage carbohydrate that is mobilized during nutrient stress and spore germination. Together with ntp1, regulates the level of trehalose as a protectant for cell integrity during thermal, osmotic, and oxidative stress. This Schizosaccharomyces pombe (strain 972 / ATCC 24843) (Fission yeast) protein is Trehalose-phosphatase.